The sequence spans 186 residues: MDADSDVALDILITNVVCVFRTRCHLNLRKIALEGANVIYKRDVGKVLMKLRKPRITATIWSSGKIICTGATSEEEAKFGARRLARSLQKLGFQVIFTDFKVVNVLAVCNMPFEIRLPEFTKNNRPHASYEPELHPAVCYRIKSLRATLQIFSTGSITVTGPNVKAVATAVEQIYPFVFESRKEIL.

This sequence belongs to the TBP family. As to quaternary structure, binds TFIIA and TFIIB.

It localises to the cytoplasm. It is found in the nucleus. Its function is as follows. Part of a specialized transcription system that mediates the transcription of most ribosomal proteins through the 5'-TCT-3' motif which is a core promoter element at these genes. Seems to also mediate the transcription of NF1. Does not bind the TATA box. The chain is TATA box-binding protein-like 1 (TBPL1) from Bos taurus (Bovine).